Reading from the N-terminus, the 1132-residue chain is Phospholipid-transporting ATPase IG (1132 aa).

Topologically, residues 1–66 (MQMVPSLPPA…NFLPKNLFEQ (66 aa)) are cytoplasmic. Residues 67–85 (FRRIANFYFLIIFLVQVTV) form a helical membrane-spanning segment. Residue aspartate 86 is a topological domain, extracellular. Residues 87–107 (TPTSPVTSGLPLFFVITVTAI) form a helical membrane-spanning segment. Residues 108-290 (KQGYEDCLRH…SQKRSAVEKS (183 aa)) are Cytoplasmic-facing. The helical transmembrane segment at 291–311 (INAFLIVYLFILLTKAAVCTT) threads the bilayer. Residues 312 to 346 (LKYVWQSTPYNDEPWYNQKTQKERETLKVLKMFTD) are Extracellular-facing. A helical transmembrane segment spans residues 347-367 (FLSFMVLFNFIIPVSMYVTVE). Topologically, residues 368-879 (MQKFLGSFFI…YVRIAHLVQY (512 aa)) are cytoplasmic. The active-site 4-aspartylphosphate intermediate is aspartate 412. ATP-binding residues include aspartate 412, lysine 413, and threonine 414. Aspartate 412 lines the Mg(2+) pocket. Mg(2+) is bound at residue threonine 414. The residue at position 445 (serine 445) is a Phosphoserine. ATP-binding residues include glutamate 501, phenylalanine 543, lysine 566, arginine 597, threonine 677, glycine 678, aspartate 679, arginine 792, and lysine 798. Aspartate 819 is a binding site for Mg(2+). 2 residues coordinate ATP: asparagine 822 and aspartate 823. Residue aspartate 823 participates in Mg(2+) binding. A helical transmembrane segment spans residues 880 to 900 (FFYKNLCFILPQFLYQFFCGF). Over 901–908 (SQQPLYDA) the chain is Extracellular. A helical membrane pass occupies residues 909–929 (AYLTMYNICFTSLPILAYSLL). Over 930 to 955 (EQHINIDTLTSDPRLYMKISGNAMLQ) the chain is Cytoplasmic. A helical transmembrane segment spans residues 956–976 (LGPFLYWTFLAAFEGTVFFFG). The Extracellular portion of the chain corresponds to 977–995 (TYFLFQTASLEENGKVYGN). A helical transmembrane segment spans residues 996–1016 (WTFGTIVFTVLVFTVTLKLAL). The Cytoplasmic segment spans residues 1017 to 1026 (DTRFWTWINH). Residues 1027-1047 (FVIWGSLAFYVFFSFFWGGII) traverse the membrane as a helical segment. The Extracellular portion of the chain corresponds to 1048-1069 (WPFLKQQRMYFVFAQMLSSVST). The chain crosses the membrane as a helical span at residues 1070 to 1090 (WLAIILLIFISLFPEILLIVL). Over 1091 to 1132 (KNVRRRSARRNLSCRRASDSLSARPSVRPLLLRTFSDESNVL) the chain is Cytoplasmic. Phosphoserine is present on residues serine 1108, serine 1116, and serine 1126. The short motif at 1116–1121 (SVRPLL) is the Di-leucine motif element.

This sequence belongs to the cation transport ATPase (P-type) (TC 3.A.3) family. Type IV subfamily. As to quaternary structure, component of a P4-ATPase flippase complex which consists of a catalytic alpha subunit ATP11C and an accessory beta subunit TMEM30A. It depends on Mg(2+) as a cofactor. Post-translationally, proteolytically cleaved by CASP3, CASP6 and CASP7. Phosphorylated at Ser-1116 likely by PRKCA; this creates a functional di-leucine motif that is sufficient for endocytosis. In terms of tissue distribution, widely expressed.

It localises to the cell membrane. The protein resides in the endoplasmic reticulum membrane. The protein localises to the early endosome membrane. It is found in the recycling endosome membrane. The catalysed reaction is ATP + H2O + phospholipidSide 1 = ADP + phosphate + phospholipidSide 2.. It carries out the reaction a 1,2-diacyl-sn-glycero-3-phospho-L-serine(out) + ATP + H2O = a 1,2-diacyl-sn-glycero-3-phospho-L-serine(in) + ADP + phosphate + H(+). The enzyme catalyses a 1,2-diacyl-sn-glycero-3-phosphoethanolamine(out) + ATP + H2O = a 1,2-diacyl-sn-glycero-3-phosphoethanolamine(in) + ADP + phosphate + H(+). With respect to regulation, the flippase activity is inactivated by caspase-mediated cleavage in apoptotic cells, allowing for PS exposure on the cell surface and engulfment of apoptotic cells by macrophages. The ATPase activity is up-regulated by aminophospholipids PS and PE and down-regulated by Increasing intracellular Ca2+ levels. Its function is as follows. Catalytic component of a P4-ATPase flippase complex which catalyzes the hydrolysis of ATP coupled to the transport of aminophospholipids, phosphatidylserines (PS) and phosphatidylethanolamines (PE), from the outer to the inner leaflet of the plasma membrane. Major PS-flippase in immune cell subsets. In erythrocyte plasma membrane, it is required to maintain PS in the inner leaflet preventing its exposure on the surface. This asymmetric distribution is critical for the survival of erythrocytes in circulation since externalized PS is a phagocytic signal for erythrocyte clearance by splenic macrophages. Required for B cell differentiation past the pro-B cell stage. Seems to mediate PS flipping in pro-B cells. May be involved in the transport of cholestatic bile acids. The chain is Phospholipid-transporting ATPase IG from Homo sapiens (Human).